Consider the following 406-residue polypeptide: NADH-ubiquinone oxidoreductase 49 kDa subunit (406 aa).

Belongs to the complex I 49 kDa subunit family. In terms of assembly, complex I is composed of 45 different subunits. Component of the iron-sulfur (IP) fragment of the enzyme.

The protein resides in the mitochondrion inner membrane. The enzyme catalyses a ubiquinone + NADH + 5 H(+)(in) = a ubiquinol + NAD(+) + 4 H(+)(out). Core subunit of the mitochondrial membrane respiratory chain NADH dehydrogenase (Complex I) that is believed to belong to the minimal assembly required for catalysis. Complex I functions in the transfer of electrons from NADH to the respiratory chain. The immediate electron acceptor for the enzyme is believed to be ubiquinone. The sequence is that of NADH-ubiquinone oxidoreductase 49 kDa subunit (nad7) from Dictyostelium citrinum (Slime mold).